A 302-amino-acid chain; its full sequence is 4-hydroxy-tetrahydrodipicolinate synthase (302 aa).

Pyruvate is bound at residue Thr55. Tyr144 serves as the catalytic Proton donor/acceptor. Lys172 functions as the Schiff-base intermediate with substrate in the catalytic mechanism. Val214 lines the pyruvate pocket.

It belongs to the DapA family. As to quaternary structure, homotetramer; dimer of dimers.

Its subcellular location is the cytoplasm. The catalysed reaction is L-aspartate 4-semialdehyde + pyruvate = (2S,4S)-4-hydroxy-2,3,4,5-tetrahydrodipicolinate + H2O + H(+). Its pathway is amino-acid biosynthesis; L-lysine biosynthesis via DAP pathway; (S)-tetrahydrodipicolinate from L-aspartate: step 3/4. Catalyzes the condensation of (S)-aspartate-beta-semialdehyde [(S)-ASA] and pyruvate to 4-hydroxy-tetrahydrodipicolinate (HTPA). The polypeptide is 4-hydroxy-tetrahydrodipicolinate synthase (Prochlorococcus marinus (strain MIT 9211)).